The following is a 687-amino-acid chain: DNA ligase (687 aa).

NAD(+) contacts are provided by residues 33–37 (DAEFD), 83–84 (SL), and glutamate 113. The active-site N6-AMP-lysine intermediate is lysine 115. NAD(+) is bound by residues arginine 136, glutamate 176, lysine 292, and lysine 316. 4 residues coordinate Zn(2+): cysteine 410, cysteine 413, cysteine 429, and cysteine 435. The 89-residue stretch at 599–687 (SVPRTLAGVT…GPPAEVGEPT (89 aa)) folds into the BRCT domain.

The protein belongs to the NAD-dependent DNA ligase family. LigA subfamily. The cofactor is Mg(2+). Requires Mn(2+) as cofactor.

The enzyme catalyses NAD(+) + (deoxyribonucleotide)n-3'-hydroxyl + 5'-phospho-(deoxyribonucleotide)m = (deoxyribonucleotide)n+m + AMP + beta-nicotinamide D-nucleotide.. Functionally, DNA ligase that catalyzes the formation of phosphodiester linkages between 5'-phosphoryl and 3'-hydroxyl groups in double-stranded DNA using NAD as a coenzyme and as the energy source for the reaction. It is essential for DNA replication and repair of damaged DNA. This Mycobacterium marinum (strain ATCC BAA-535 / M) protein is DNA ligase.